The primary structure comprises 276 residues: NH(3)-dependent NAD(+) synthetase (276 aa).

43–50 contacts ATP; that stretch reads GISGGVDS. Asp-49 provides a ligand contact to Mg(2+). Position 146 (Arg-146) interacts with deamido-NAD(+). Residue Thr-166 participates in ATP binding. Glu-171 is a binding site for Mg(2+). Deamido-NAD(+) contacts are provided by Lys-179 and Asp-186. ATP is bound by residues Lys-195 and Thr-217. 266-267 lines the deamido-NAD(+) pocket; it reads HK.

The protein belongs to the NAD synthetase family. In terms of assembly, homodimer.

It catalyses the reaction deamido-NAD(+) + NH4(+) + ATP = AMP + diphosphate + NAD(+) + H(+). The protein operates within cofactor biosynthesis; NAD(+) biosynthesis; NAD(+) from deamido-NAD(+) (ammonia route): step 1/1. In terms of biological role, catalyzes the ATP-dependent amidation of deamido-NAD to form NAD. Uses ammonia as a nitrogen source. The protein is NH(3)-dependent NAD(+) synthetase of Shewanella halifaxensis (strain HAW-EB4).